The chain runs to 210 residues: Orotate phosphoribosyltransferase (210 aa).

5-phospho-alpha-D-ribose 1-diphosphate contacts are provided by residues arginine 94, lysine 98, histidine 100, and 120–128 (EDLISTGGS). Serine 124 lines the orotate pocket.

The protein belongs to the purine/pyrimidine phosphoribosyltransferase family. PyrE subfamily. In terms of assembly, homodimer. Mg(2+) is required as a cofactor.

The enzyme catalyses orotidine 5'-phosphate + diphosphate = orotate + 5-phospho-alpha-D-ribose 1-diphosphate. It functions in the pathway pyrimidine metabolism; UMP biosynthesis via de novo pathway; UMP from orotate: step 1/2. Functionally, catalyzes the transfer of a ribosyl phosphate group from 5-phosphoribose 1-diphosphate to orotate, leading to the formation of orotidine monophosphate (OMP). This Bacillus cereus (strain ATCC 14579 / DSM 31 / CCUG 7414 / JCM 2152 / NBRC 15305 / NCIMB 9373 / NCTC 2599 / NRRL B-3711) protein is Orotate phosphoribosyltransferase.